The primary structure comprises 530 residues: Bifunctional purine biosynthesis protein PurH (530 aa).

The MGS-like domain maps to 1–148 (MNNARPIRRA…KNHKDVTIVV (148 aa)).

Belongs to the PurH family.

The catalysed reaction is (6R)-10-formyltetrahydrofolate + 5-amino-1-(5-phospho-beta-D-ribosyl)imidazole-4-carboxamide = 5-formamido-1-(5-phospho-D-ribosyl)imidazole-4-carboxamide + (6S)-5,6,7,8-tetrahydrofolate. It catalyses the reaction IMP + H2O = 5-formamido-1-(5-phospho-D-ribosyl)imidazole-4-carboxamide. Its pathway is purine metabolism; IMP biosynthesis via de novo pathway; 5-formamido-1-(5-phospho-D-ribosyl)imidazole-4-carboxamide from 5-amino-1-(5-phospho-D-ribosyl)imidazole-4-carboxamide (10-formyl THF route): step 1/1. The protein operates within purine metabolism; IMP biosynthesis via de novo pathway; IMP from 5-formamido-1-(5-phospho-D-ribosyl)imidazole-4-carboxamide: step 1/1. This is Bifunctional purine biosynthesis protein PurH from Vibrio vulnificus (strain YJ016).